A 276-amino-acid polypeptide reads, in one-letter code: Undecaprenyl-diphosphatase (276 aa).

The next 8 helical transmembrane spans lie at 6–26, 49–69, 89–109, 117–137, 151–171, 181–201, 224–244, and 256–276; these read IEILKVIFLGIVEGITEWLPI, EMFFVVIQLGAILAVVVMFWN, FSLWFKVAVACVPSAIMGILF, LHTPVVIAIMLILYGVLFIVI, LADISYKTALMIGVFQVLSLI, IIGALLIGVSRVAAAEFTFFL, AELLTLVIGMAVAFAVSVFVI, and FKVFGWYRIVLGILVLLITAI.

The protein belongs to the UppP family.

The protein localises to the cell membrane. It carries out the reaction di-trans,octa-cis-undecaprenyl diphosphate + H2O = di-trans,octa-cis-undecaprenyl phosphate + phosphate + H(+). Catalyzes the dephosphorylation of undecaprenyl diphosphate (UPP). Confers resistance to bacitracin. The chain is Undecaprenyl-diphosphatase from Enterococcus faecalis (Streptococcus faecalis).